Here is a 1108-residue protein sequence, read N- to C-terminus: Retinal guanylyl cyclase 2 (1108 aa).

The signal sequence occupies residues 1–50 (MFLGPWPFSRLLSWFAISSRLSGQHGLPSSKFLRCLCLLALLPLLRWGQA). The Extracellular segment spans residues 51–469 (LPYKIGVIGP…CQGGIDPALA (419 aa)). C104 and C132 are disulfide-bonded. A helical membrane pass occupies residues 470–490 (MMVCFALLIALLSINGFAYFI). At 491–1108 (RRRINKIQLI…AERQLVRNKP (618 aa)) the chain is on the cytoplasmic side. The Protein kinase domain occupies 532 to 812 (FQIISEVQSG…DEIFNQFKTF (281 aa)). Residues 884-1014 (TLYFSDIVGF…DTVNTASRME (131 aa)) enclose the Guanylate cyclase domain.

This sequence belongs to the adenylyl cyclase class-4/guanylyl cyclase family. Homodimer. Interacts with RD3; promotes the exit of GUCY2F from the endoplasmic reticulum and its trafficking to the photoreceptor outer segments. There are 9 conserved cysteine residues in sensory guanylate cyclases, 6 in the extracellular domain, which may be involved in intra- or interchain disulfide bonds. As to expression, retina.

The protein localises to the membrane. It localises to the photoreceptor outer segment membrane. The enzyme catalyses GTP = 3',5'-cyclic GMP + diphosphate. Activated by GUCA1B when free calcium ions concentration is low, and inhibited by GUCA1B when free calcium ions concentration is high. Inhibited by RD3. Functionally, responsible for the synthesis of cyclic GMP (cGMP) in rods and cones of photoreceptors. Plays an essential role in phototransduction, by mediating cGMP replenishment. May also participate in the trafficking of membrane-asociated proteins to the photoreceptor outer segment membrane. This Mus musculus (Mouse) protein is Retinal guanylyl cyclase 2.